The following is a 43-amino-acid chain: Cytochrome b559 subunit beta (43 aa).

Residues W18 to G34 traverse the membrane as a helical segment. H22 is a heme binding site.

Belongs to the PsbE/PsbF family. In terms of assembly, heterodimer of an alpha subunit and a beta subunit. PSII is composed of 1 copy each of membrane proteins PsbA, PsbB, PsbC, PsbD, PsbE, PsbF, PsbH, PsbI, PsbJ, PsbK, PsbL, PsbM, PsbT, PsbX, PsbY, PsbZ, Psb30/Ycf12, at least 3 peripheral proteins of the oxygen-evolving complex and a large number of cofactors. It forms dimeric complexes. Heme b is required as a cofactor.

The protein localises to the plastid. It localises to the chloroplast thylakoid membrane. Functionally, this b-type cytochrome is tightly associated with the reaction center of photosystem II (PSII). PSII is a light-driven water:plastoquinone oxidoreductase that uses light energy to abstract electrons from H(2)O, generating O(2) and a proton gradient subsequently used for ATP formation. It consists of a core antenna complex that captures photons, and an electron transfer chain that converts photonic excitation into a charge separation. This is Cytochrome b559 subunit beta from Trieres chinensis (Marine centric diatom).